The primary structure comprises 309 residues: Probable 2,4-dienoyl-CoA reductase decr-1.2 [(3E)-enoyl-CoA-producing] (309 aa).

NADP(+)-binding positions include 28-60 (VLVT…RRME), 32-37 (GGGTGI), arginine 57, and aspartate 83. Arginine 57 is a substrate binding site. Substrate is bound by residues phenylalanine 116 and serine 124. The Proton acceptor role is filled by tyrosine 166. NADP(+) is bound by residues lysine 181 and 207-210 (PGPI). Residue arginine 218 participates in substrate binding.

The protein belongs to the short-chain dehydrogenases/reductases (SDR) family. 2,4-dienoyl-CoA reductase subfamily.

The catalysed reaction is a (2E,4E)-dienoyl-CoA + NADPH + H(+) = a 4,5-saturated-(3E)-enoyl-CoA + NADP(+). It catalyses the reaction a (2E,4Z)-dienoyl-CoA + NADPH + H(+) = a 4,5-saturated-(3E)-enoyl-CoA + NADP(+). Functionally, auxiliary enzyme of beta-oxidation. It participates in the metabolism of unsaturated fatty enoyl-CoA esters having double bonds in both even- and odd-numbered positions. Catalyzes the NADP-dependent reduction of 2,4-dienoyl-CoA to yield trans-3-enoyl-CoA. The sequence is that of Probable 2,4-dienoyl-CoA reductase decr-1.2 [(3E)-enoyl-CoA-producing] from Caenorhabditis elegans.